Reading from the N-terminus, the 2310-residue chain is Retinal-specific phospholipid-transporting ATPase ABCA4 (2310 aa).

The Cytoplasmic segment spans residues 1-21; sequence MGFLRQIQLLLWKNWTLRKRQ. A helical transmembrane segment spans residues 22-42; the sequence is KIRFVVELVWPLSLFLVLIWL. At 43 to 646 the chain is on the extracellular side; sequence RNANPLYSQH…MPYPCFVDDS (604 aa). Cystine bridges form between C54/C81 and C75/C324. N-linked (GlcNAc...) asparagine glycosylation is present at N98. Positions 336 and 338 each coordinate Mg(2+). C370 and C519 are oxidised to a cystine. N415 and N504 each carry an N-linked (GlcNAc...) asparagine glycan. An N-all-trans-retinylidenephosphatidylethanolamine-binding residues include R587 and R653. 3 cysteine pairs are disulfide-bonded: C641/C1489, C1443/C1454, and C1487/C1501. Residues 647-667 traverse the membrane as a helical segment; the sequence is FMIILNRCFPIFMVLAWIYSV. Residues 668–699 lie on the Cytoplasmic side of the membrane; the sequence is SMTVKGIVLEKELRLKETLKNQGVSNAVIWCT. Residues 700-720 traverse the membrane as a helical segment; the sequence is WFLDSFSIMALSIFLLTLFIM. The Extracellular segment spans residues 721–730; it reads HGRILHYSDP. The helical transmembrane segment at 731 to 751 threads the bilayer; the sequence is FILFLFLLAFATATIMQSFLL. Over 752 to 759 the chain is Cytoplasmic; that stretch reads STLFSKAS. A helical transmembrane segment spans residues 760–780; the sequence is LAAACSGVIYFTLYLPHVLCF. Residues 781 to 835 lie on the Extracellular side of the membrane; that stretch reads AWQDRMTADLKTTVSLLSSVAFGFGTEYLVRFEEQGLGLQWSNIGKSPLEGDEFS. Residues 836-856 form a helical membrane-spanning segment; sequence FLLSMKMMLLDAALYGLLAWY. Over 857–1375 the chain is Cytoplasmic; sequence LDQVFPGDYG…IRSRKDFVAQ (519 aa). The tract at residues 891 to 910 is disordered; it reads ERALEKTEPLTEEMEDPEHP. Residue T901 is modified to Phosphothreonine. One can recognise an ABC transporter 1 domain in the interval 929–1160; it reads VCVKNLVKVF…FGTGFYLTLV (232 aa). Residues F938, G966, and K969 each coordinate ATP. T970 contributes to the Mg(2+) binding site. Residues T971, Q1010, K1054, G1064, G1065, and H1118 each contribute to the ATP site. The residue at position 1185 (S1185) is a Phosphoserine. The disordered stretch occupies residues 1311–1344; sequence RQYAQAPHTCSPGQVDPPKGQPSPEPEDPGVPFN. A helical membrane pass occupies residues 1376-1396; sequence IVLPATFVFLALMLSIIVPPF. Residues 1397-1726 lie on the Extracellular side of the membrane; that stretch reads GEFPALTLHP…VSPTTYWLTN (330 aa). A glycan (N-linked (GlcNAc...) asparagine) is linked at N1468. 3 N-linked (GlcNAc...) asparagine glycosylation sites follow: N1528, N1587, and N1661. The chain crosses the membrane as a helical span at residues 1727–1747; the sequence is FLWDIMNYAVSAGLVVGIFIG. Over 1748-1758 the chain is Cytoplasmic; that stretch reads FQKKAYTSPDN. The helical transmembrane segment at 1759–1779 threads the bilayer; the sequence is LPALVSLLMLYGWAVIPMMYP. Residues 1780–1791 lie on the Extracellular side of the membrane; that stretch reads ASFLFEVPSTAY. Residues 1792–1812 form a helical membrane-spanning segment; sequence VALSCANLFIGINSSAITFVL. Residues 1813–1830 lie on the Cytoplasmic side of the membrane; sequence ELFENNRTLLRFNAMLRK. A helical transmembrane segment spans residues 1831-1851; that stretch reads LLIVFPHFCLGRGLIDLALSQ. Over 1852–1872 the chain is Extracellular; it reads AVTDVYAQFGEEYSANPFQWD. The chain crosses the membrane as a helical span at residues 1873 to 1893; that stretch reads LIGKNLVAMAIEGVVYFLLTL. At 1894–2310 the chain is on the cytoplasmic side; the sequence is LIQHHFFLTR…AEDKHTRSPQ (417 aa). The 233-residue stretch at 1937–2169 folds into the ABC transporter 2 domain; it reads LKLNELTKVY…FGDGYIVTMK (233 aa). The ATP site is built by N1973, G1974, K1977, T1978, T1979, and G2072. Mg(2+) is bound at residue T1978. The segment at 2243–2248 is essential for ATP binding and ATPase activity; the sequence is VFVNFA. The segment at 2266–2310 is disordered; the sequence is ASWQAKLEEKSGRLQTQEPLPAGSEQLANGSNPTAAEDKHTRSPQ. Residues 2301-2310 show a composition bias toward basic and acidic residues; that stretch reads AEDKHTRSPQ.

It belongs to the ABC transporter superfamily. ABCA family. N-glycosylated. In terms of processing, proteolytic cleavage by trypsin leads to a 120-kDa N-terminal fragment and a 115-kDa C-terminal fragment that are linked through disulfide bonds. Post-translationally, phosphorylation is independent of light exposure and modulates ATPase activity. In terms of tissue distribution, retinal-specific. Seems to be exclusively found in the rims of rod photoreceptor cells.

The protein localises to the membrane. The protein resides in the endoplasmic reticulum. It is found in the cell projection. Its subcellular location is the cilium. It localises to the photoreceptor outer segment. The enzyme catalyses an N-all-trans-retinylidenephosphatidylethanolamine(out) + ATP + H2O = an N-all-trans-retinylidenephosphatidylethanolamine(in) + ADP + phosphate + H(+). It carries out the reaction ATP + H2O + phospholipidSide 1 = ADP + phosphate + phospholipidSide 2.. The catalysed reaction is a 1,2-diacyl-sn-glycero-3-phosphoethanolamine(out) + ATP + H2O = a 1,2-diacyl-sn-glycero-3-phosphoethanolamine(in) + ADP + phosphate + H(+). It catalyses the reaction N-11-cis-retinylidenephosphatidylethanolamine(out) + ATP + H2O = N-11-cis-retinylidenephosphatidylethanolamine(in) + ADP + phosphate + H(+). The enzyme catalyses ATP + H2O = ADP + phosphate + H(+). ATPase activity is decreased by cholesterol and ceramide. Phospholipids translocase activity is highly reduced by berylium fluoride and aluminum floride. N-ethylmaleimide inhibits phospholipid translocase activity. Functionally, flippase that catalyzes in an ATP-dependent manner the transport of retinal-phosphatidylethanolamine conjugates like the 11-cis and all-trans isomers of N-retinylidene-phosphatidylethanolamine from the lumen to the cytoplasmic leaflet of photoreceptor outer segment disk membranes, where N-cis-retinylidene-phosphatidylethanolamine (N-cis-R-PE) is then isomerized to its all-trans isomer (N-trans-R-PE) and reduced by RDH8 to produce all-trans-retinol (all-trans-rol) and therefore prevents the accumulation of excess of 11-cis-retinal and its schiff-base conjugate and the formation of toxic bisretinoid. Displays ATPase activity in vitro in absence of retinal substrate. May display GTPase activity that is strongly influenced by the lipid environment and the presence of retinoid compounds. Binds the unprotonated form of N-retinylidene-phosphatidylethanolamine with high affinity in the absence of ATP and ATP binding and hydrolysis induce a protein conformational change that causes the dissociation of N-retinylidene-phosphatidylethanolamine. This is Retinal-specific phospholipid-transporting ATPase ABCA4 from Mus musculus (Mouse).